Here is a 407-residue protein sequence, read N- to C-terminus: Methyltransferase/ribosomally synthesized type I borosin cyclic peptide precursor ceuMA2 (407 aa).

The segment at 1–246 is methyltransferase domain; it reads MATTKTGSLT…TTSTLYIPPR (246 aa). Residues R70, Y74, and Y96 contribute to the active site. Y96, H98, V101, A128, Q170, G208, S239, and T240 together coordinate S-adenosyl-L-methionine. The segment at 247–370 is clasp domain; it reads EIAPVDQRIM…GPVYKVMRAT (124 aa). A precursor leader region spans residues 371 to 393; that stretch reads PAAIAAGQEHSLDEIAGSADSES. Residues T399 and T400 each carry the N-methylthreonine modification. The residue at position 401 (I401) is an N-methylisoleucine. An N-methylvaline mark is found at V402 and V403. I404 is modified (N-methylisoleucine). V405 is subject to N-methylvaline. Position 406 is an N-methylhistidine (H406).

In the N-terminal section; belongs to the precorrin methyltransferase family. As to quaternary structure, homodimer. Post-translationally, ceuMA2 automethylates at Thr-399, Thr-400, Ile-401, Val-402, Val-403, Ile-404, Val-405 and His-406 before being processed by a prolyloligopeptidase which likely forms a peptidyl ester upon removal of the follower propeptide, which then undergoes macrocyclization with the N-terminus of the modified core peptide. Peptide backbone alpha-N-methylations change the physicochemical properties of amide bonds to provide structural constraints and other favorable characteristics including biological membrane permeability to peptides.

The protein operates within secondary metabolite biosynthesis. Functionally, fusion protein of the methyltransferase ceuM2 and a type I borosin core peptide; part of the gene cluster that mediates the biosynthesis of a type I borosin, a highly methylated cyclic peptide with potent biological activities. Type I borosins derive from the C-terminus of the fusion protein, and it is the same protein that methylates its own C-terminus using S-adenosyl methionine (SAM). The C-terminus is subsequently cleaved off and macrocyclized by a prolyloligopeptidase to give the final product. This is Methyltransferase/ribosomally synthesized type I borosin cyclic peptide precursor ceuMA2 from Cerrena unicolor (Canker rot fungus).